The primary structure comprises 103 residues: Cell division suppressor protein YneA (103 aa).

One can recognise a LysM domain in the interval 36-87 (VKIEVQEGDTLWELADRIKGGKTADKHKFIEWVADKNNLPTSVIKPGDVLIL).

It belongs to the YneA family.

The protein resides in the cytoplasm. In terms of biological role, inhibits cell division during the SOS response. Affects a later stage of the cell division protein assembly, after the assembly of the Z ring, by probably suppressing recruitment of FtsL and/or DivIC to the division machinery. In Bacillus licheniformis (strain ATCC 14580 / DSM 13 / JCM 2505 / CCUG 7422 / NBRC 12200 / NCIMB 9375 / NCTC 10341 / NRRL NRS-1264 / Gibson 46), this protein is Cell division suppressor protein YneA.